A 70-amino-acid polypeptide reads, in one-letter code: Dermaseptin-H3 (70 aa).

The first 22 residues, 1–22 (MAFLKKSLFLVLFLGMVSLSIC), serve as a signal peptide directing secretion. Positions 23 to 43 (EEEKRENEDEELQEDDEQSEM) are excised as a propeptide. Positions 25–44 (EKRENEDEELQEDDEQSEMK) are disordered. Acidic residues predominate over residues 30–40 (EDEELQEDDEQ). The residue at position 70 (Leu70) is a Leucine amide.

In terms of tissue distribution, expressed by the skin glands.

The protein localises to the secreted. Has antibacterial activity against the Gram-negative bacteria E.coli and P.aeruginosa, and the Gram-positive bacteria S.aureus and M.luteus. Has antiprotozoal activity against L.amazonensis. No hemolytic activity. This is Dermaseptin-H3 from Pithecopus hypochondrialis (Orange-legged leaf frog).